Consider the following 263-residue polypeptide: Ribonuclease HII (263 aa).

Positions Gln71–Asn262 constitute an RNase H type-2 domain. Asp77, Glu78, and Asp172 together coordinate a divalent metal cation.

This sequence belongs to the RNase HII family. It depends on Mn(2+) as a cofactor. The cofactor is Mg(2+).

Its subcellular location is the cytoplasm. The enzyme catalyses Endonucleolytic cleavage to 5'-phosphomonoester.. Functionally, endonuclease that specifically degrades the RNA of RNA-DNA hybrids. The sequence is that of Ribonuclease HII from Streptococcus pyogenes serotype M12 (strain MGAS2096).